A 247-amino-acid chain; its full sequence is Probable transcriptional regulatory protein Hhal_2210 (247 aa).

The protein belongs to the TACO1 family.

The protein resides in the cytoplasm. The polypeptide is Probable transcriptional regulatory protein Hhal_2210 (Halorhodospira halophila (strain DSM 244 / SL1) (Ectothiorhodospira halophila (strain DSM 244 / SL1))).